The sequence spans 144 residues: Putative pre-16S rRNA nuclease (144 aa).

Belongs to the YqgF nuclease family.

It localises to the cytoplasm. Its function is as follows. Could be a nuclease involved in processing of the 5'-end of pre-16S rRNA. The chain is Putative pre-16S rRNA nuclease from Picosynechococcus sp. (strain ATCC 27264 / PCC 7002 / PR-6) (Agmenellum quadruplicatum).